Consider the following 386-residue polypeptide: Succinyl-diaminopimelate desuccinylase (386 aa).

Zn(2+) is bound at residue H72. The active site involves D74. D105 lines the Zn(2+) pocket. The active-site Proton acceptor is the E139. Zn(2+) contacts are provided by E140, E168, and H353.

This sequence belongs to the peptidase M20A family. DapE subfamily. Homodimer. It depends on Zn(2+) as a cofactor. The cofactor is Co(2+).

It carries out the reaction N-succinyl-(2S,6S)-2,6-diaminopimelate + H2O = (2S,6S)-2,6-diaminopimelate + succinate. It participates in amino-acid biosynthesis; L-lysine biosynthesis via DAP pathway; LL-2,6-diaminopimelate from (S)-tetrahydrodipicolinate (succinylase route): step 3/3. In terms of biological role, catalyzes the hydrolysis of N-succinyl-L,L-diaminopimelic acid (SDAP), forming succinate and LL-2,6-diaminopimelate (DAP), an intermediate involved in the bacterial biosynthesis of lysine and meso-diaminopimelic acid, an essential component of bacterial cell walls. This Rhodospirillum centenum (strain ATCC 51521 / SW) protein is Succinyl-diaminopimelate desuccinylase.